We begin with the raw amino-acid sequence, 49 residues long: uncharacterized protein (49 aa).

This is an uncharacterized protein from Treponema pallidum (strain Nichols).